The chain runs to 130 residues: Small ribosomal subunit protein uS8 (130 aa).

The protein belongs to the universal ribosomal protein uS8 family. In terms of assembly, part of the 30S ribosomal subunit.

Functionally, one of the primary rRNA binding proteins, it binds directly to 16S rRNA central domain where it helps coordinate assembly of the platform of the 30S subunit. In Thermococcus gammatolerans (strain DSM 15229 / JCM 11827 / EJ3), this protein is Small ribosomal subunit protein uS8.